The chain runs to 235 residues: Rab-like protein 3 (235 aa).

Positions 1 to 235 are small GTPase-like; that stretch reads MASLDRVKVL…GGNFKSLHYD (235 aa). GTP-binding positions include 16-21, 148-150, and 179-180; these read GVGKSS, KLD, and DC.

This sequence belongs to the small GTPase superfamily. Rab family. Homodimer.

In terms of biological role, required for KRAS signaling regulation and modulation of cell proliferation. Regulator of KRAS prenylation, and probably prenylation of other small GTPases. Required for lymphocyte development and function. Not required for myeloid cell development. The polypeptide is Rab-like protein 3 (rabl3) (Xenopus tropicalis (Western clawed frog)).